The primary structure comprises 153 residues: Endoribonuclease YbeY (153 aa).

Zn(2+)-binding residues include histidine 116, histidine 120, and histidine 126.

It belongs to the endoribonuclease YbeY family. It depends on Zn(2+) as a cofactor.

The protein localises to the cytoplasm. In terms of biological role, single strand-specific metallo-endoribonuclease involved in late-stage 70S ribosome quality control and in maturation of the 3' terminus of the 16S rRNA. The chain is Endoribonuclease YbeY from Clavibacter sepedonicus (Clavibacter michiganensis subsp. sepedonicus).